We begin with the raw amino-acid sequence, 157 residues long: Probable succinate transporter subunit YjjB (157 aa).

Helical transmembrane passes span 8–28 (FALA…AMVF), 57–77 (LNIE…GIQW), 87–107 (VFTV…TAMI), and 129–149 (FLTA…PGLW).

Belongs to the ThrE exporter (TC 2.A.79) family. As to quaternary structure, the transporter is composed of YjjB and YjjP.

It is found in the cell inner membrane. Its function is as follows. Involved in succinate export with YjjP. Both proteins are required for export. The protein is Probable succinate transporter subunit YjjB of Shigella boydii serotype 4 (strain Sb227).